Consider the following 288-residue polypeptide: 4-diphosphocytidyl-2-C-methyl-D-erythritol kinase (288 aa).

Lys-11 is a catalytic residue. 100-110 is a binding site for ATP; it reads PTSAGLGSGSS. Asp-140 is an active-site residue.

This sequence belongs to the GHMP kinase family. IspE subfamily.

The enzyme catalyses 4-CDP-2-C-methyl-D-erythritol + ATP = 4-CDP-2-C-methyl-D-erythritol 2-phosphate + ADP + H(+). The protein operates within isoprenoid biosynthesis; isopentenyl diphosphate biosynthesis via DXP pathway; isopentenyl diphosphate from 1-deoxy-D-xylulose 5-phosphate: step 3/6. Functionally, catalyzes the phosphorylation of the position 2 hydroxy group of 4-diphosphocytidyl-2C-methyl-D-erythritol. The sequence is that of 4-diphosphocytidyl-2-C-methyl-D-erythritol kinase from Wolbachia sp. subsp. Brugia malayi (strain TRS).